Reading from the N-terminus, the 438-residue chain is MLGLRDVCFDPMLSSYDYHPISLMSTVPNDREIVQAVVDIWRKDKATEKLGAAKLTGLVKLTHSDWQLSEKRVKTVMKAANLGLNQEKFCYAGSIMSHATPGLDMPEKVTLNIAKNRGKGLYAKKDIKKDEELWNEQAFLLVPPLEHVGIMRKGMGCAFCSRPFQSHNGVECPSCAAKWCDNQCKKKDVTHVAMWHESRHGKVTRVEWRAFEDFCVENGWMALYALGLLWLRVIRDPKKDEVQKQMMAFARVGQDERHKAVEQSNSLFASEQSEVLWKKGYEMLDKLLLDTEFSYEKDFLPGLGMFNINNVDGNMYLTQSHLNHSCEPNVDVKNVGRTQGISVRAKRDIKTGEELFTTYVNPEHQLDDRRYNLRVNWGFNCNCTRCKREEREEMEYLDELVSNWTIEHKRKEMKEEKKERTRTRTRSVHFDKEPEVVA.

Positions 107-360 constitute an SET domain; the sequence is EKVTLNIAKN…TGEELFTTYV (254 aa). Composition is skewed to basic and acidic residues over residues 409–419 and 428–438; these read KRKEMKEEKKE and VHFDKEPEVVA. The disordered stretch occupies residues 409-438; it reads KRKEMKEEKKERTRTRTRSVHFDKEPEVVA.

This sequence belongs to the class V-like SAM-binding methyltransferase superfamily. Histone-lysine methyltransferase family. SET5 subfamily.

It localises to the nucleus. The protein resides in the chromosome. It is found in the cytoplasm. It catalyses the reaction L-lysyl-[histone] + S-adenosyl-L-methionine = N(6)-methyl-L-lysyl-[histone] + S-adenosyl-L-homocysteine + H(+). Functionally, histone methyltransferase that monomethylates 'Lys-5', 'Lys-8' and 'Lys-12' of histone H4 (H4K5me1, H4K8me1 and H4K12me1, respectively), thereby controlling gene expression and remodeling chromatin structures. This chain is Histone-lysine N-methyltransferase SET5 (SET5), found in Yarrowia lipolytica (strain CLIB 122 / E 150) (Yeast).